A 175-amino-acid chain; its full sequence is Alpha-crystallin B chain (175 aa).

Position 1 is an N-acetylmethionine (M1). S19 is subject to Phosphoserine. A glycan (O-linked (GlcNAc) serine) is linked at S41. S45 and S59 each carry phosphoserine. One can recognise a sHSP domain in the interval 56–164 (RAPSWIDTGL…PERTIPITRE (109 aa)). H83 is a binding site for Zn(2+). K90 is a glycosylation site (N-linked (Glc) (glycation) lysine). K92 carries the N6-acetyllysine; alternate modification. Residue K92 is glycosylated (N-linked (Glc) (glycation) lysine; alternate). Zn(2+) contacts are provided by H104, E106, H111, and H119. The interval 144–175 (TVNGPRKQASGPERTIPITREEKPAVTAAPKK) is disordered. Position 166 is an N6-acetyllysine (K166). O-linked (GlcNAc) threonine glycosylation is present at T170.

This sequence belongs to the small heat shock protein (HSP20) family. As to quaternary structure, heteromer composed of three CRYAA and one CRYAB subunits. Aggregates with homologous proteins, including the small heat shock protein HSPB1, to form large heteromeric complexes. Inter-subunit bridging via zinc ions enhances stability, which is crucial as there is no protein turn over in the lens. Interacts with HSPBAP1 and TTN/titin. Interacts with TMEM109; in the cellular response to DNA damage. Interacts with DES; binds rapidly during early stages of DES filament assembly and a reduced binding seen in the later stages. Interacts with TMED10; the interaction mediates the translocation from the cytoplasm into the ERGIC (endoplasmic reticulum-Golgi intermediate compartment) and thereby secretion. Interacts with ATP6V1A and with MTOR, forming a ternary complex. Post-translationally, it is not known whether either Lys-90, or Lys-92, or both are glycated. Lens as well as other tissues.

The protein localises to the cytoplasm. It is found in the nucleus. It localises to the secreted. The protein resides in the lysosome. May contribute to the transparency and refractive index of the lens. Has chaperone-like activity, preventing aggregation of various proteins under a wide range of stress conditions. In lens epithelial cells, stabilizes the ATP6V1A protein, preventing its degradation by the proteasome. In Bos taurus (Bovine), this protein is Alpha-crystallin B chain (CRYAB).